We begin with the raw amino-acid sequence, 224 residues long: Ribonuclease 3 (224 aa).

Residues 4–127 (IEKLEQSLTY…IIGAIHLEAG (124 aa)) enclose the RNase III domain. Mg(2+) is bound at residue Glu-40. Residue Asp-44 is part of the active site. Mg(2+)-binding residues include Asp-113 and Glu-116. The active site involves Glu-116. The DRBM domain maps to 154–223 (DYKTKLQEIT…AKIALEKLGA (70 aa)).

Belongs to the ribonuclease III family. Homodimer. It depends on Mg(2+) as a cofactor.

The protein localises to the cytoplasm. The enzyme catalyses Endonucleolytic cleavage to 5'-phosphomonoester.. Its function is as follows. Digests double-stranded RNA. Involved in the processing of primary rRNA transcript to yield the immediate precursors to the large and small rRNAs (23S and 16S). Also processes some mRNAs, and tRNAs when they are encoded in the rRNA operon. CRISPR (clustered regularly interspaced short palindromic repeat) is an adaptive immune system that provides protection against mobile genetic elements (viruses, transposable elements and conjugative plasmids). CRISPR clusters contain spacers, sequences complementary to antecedent mobile elements, and target invading nucleic acids. CRISPR clusters are transcribed and processed into CRISPR RNA (crRNA). In this organism endogenous ribonuclease 3 and Cas9 are required for correct coprocessing of pre-crRNA and the trans-encoded small RNA (tracrRNA). Cas9, crRNA and tracrRNA are required for cleavage of invading DNA. Complements pre-crRNA and tracrRNA coprocessing defects in an rnc deletion in S.pyogenes strain 370. The sequence is that of Ribonuclease 3 from Campylobacter jejuni subsp. jejuni serotype O:2 (strain ATCC 700819 / NCTC 11168).